A 107-amino-acid chain; its full sequence is Large ribosomal subunit protein uL24 (107 aa).

It belongs to the universal ribosomal protein uL24 family. As to quaternary structure, part of the 50S ribosomal subunit.

One of two assembly initiator proteins, it binds directly to the 5'-end of the 23S rRNA, where it nucleates assembly of the 50S subunit. Functionally, one of the proteins that surrounds the polypeptide exit tunnel on the outside of the subunit. The protein is Large ribosomal subunit protein uL24 of Malacoplasma penetrans (strain HF-2) (Mycoplasma penetrans).